The sequence spans 503 residues: Ferulic acid decarboxylase 1 (503 aa).

Mn(2+)-binding residues include asparagine 170, histidine 193, and glutamate 236. Prenylated FMN contacts are provided by residues 170-175 (NWSIAR), 192-193 (QH), and glutamate 236. Glutamate 285 acts as the Proton donor in catalysis. A prenylated FMN-binding site is contributed by lysine 394.

Belongs to the UbiD family. UbiD-like/FDC subfamily. As to quaternary structure, homodimer. May form higher order oligomers. Requires Mn(2+) as cofactor. The cofactor is prenylated FMN.

It localises to the cytoplasm. It catalyses the reaction (E)-4-coumarate + H(+) = 4-vinylphenol + CO2. It carries out the reaction (E)-cinnamate + H(+) = styrene + CO2. The catalysed reaction is (E)-ferulate + H(+) = 2-methoxy-4-vinylphenol + CO2. In terms of biological role, catalyzes the reversible decarboxylation of aromatic carboxylic acids like ferulic acid, p-coumaric acid or cinnamic acid, producing the corresponding vinyl derivatives 4-vinylphenol, 4-vinylguaiacol, and styrene, respectively, which play the role of aroma metabolites. Not essential for ubiquinone synthesis. The sequence is that of Ferulic acid decarboxylase 1 from Saccharomyces cerevisiae (strain ATCC 204508 / S288c) (Baker's yeast).